A 199-amino-acid chain; its full sequence is ATP-dependent Clp protease proteolytic subunit 2 (199 aa).

Catalysis depends on S95, which acts as the Nucleophile. Residue H120 is part of the active site.

It belongs to the peptidase S14 family. Fourteen ClpP subunits assemble into 2 heptameric rings which stack back to back to give a disk-like structure with a central cavity, resembling the structure of eukaryotic proteasomes.

It is found in the cytoplasm. It catalyses the reaction Hydrolysis of proteins to small peptides in the presence of ATP and magnesium. alpha-casein is the usual test substrate. In the absence of ATP, only oligopeptides shorter than five residues are hydrolyzed (such as succinyl-Leu-Tyr-|-NHMec, and Leu-Tyr-Leu-|-Tyr-Trp, in which cleavage of the -Tyr-|-Leu- and -Tyr-|-Trp bonds also occurs).. Its function is as follows. Cleaves peptides in various proteins in a process that requires ATP hydrolysis. Has a chymotrypsin-like activity. Plays a major role in the degradation of misfolded proteins. In Mycolicibacterium paratuberculosis (strain ATCC BAA-968 / K-10) (Mycobacterium paratuberculosis), this protein is ATP-dependent Clp protease proteolytic subunit 2.